A 153-amino-acid chain; its full sequence is Cytochrome c-type biogenesis protein CcmE (153 aa).

Residues 1 to 8 (MMTPRQRR) are Cytoplasmic-facing. A helical; Signal-anchor for type II membrane protein membrane pass occupies residues 9-29 (MTWVALMVAGVSLAAFFALTA). At 30–153 (FQKNLLYFYT…PADYSEYRKK (124 aa)) the chain is on the periplasmic side. Heme is bound by residues His-124 and Tyr-128. The tract at residues 134–153 (AESLKKNGGLPADYSEYRKK) is disordered.

This sequence belongs to the CcmE/CycJ family.

The protein resides in the cell inner membrane. In terms of biological role, heme chaperone required for the biogenesis of c-type cytochromes. Transiently binds heme delivered by CcmC and transfers the heme to apo-cytochromes in a process facilitated by CcmF and CcmH. The chain is Cytochrome c-type biogenesis protein CcmE from Methylococcus capsulatus (strain ATCC 33009 / NCIMB 11132 / Bath).